We begin with the raw amino-acid sequence, 370 residues long: Polygalacturonase 1 (370 aa).

The N-terminal stretch at 1-18 is a signal peptide; that stretch reads MRTSILSMLALGAAAVSA. Residues cysteine 36 and cysteine 51 are joined by a disulfide bond. PbH1 repeat units lie at residues 163 to 194, 195 to 216, 217 to 237, 246 to 267, and 275 to 297; these read ADNL…DVGE, STYI…AINS, GENI…SIGS, VKNV…RIKT, and VADV…VIEQ. Aspartate 209 functions as the Proton donor in the catalytic mechanism. Cysteine 211 and cysteine 227 are oxidised to a cystine. The active site involves histidine 231. An N-linked (GlcNAc...) asparagine glycan is attached at asparagine 248. 2 cysteine pairs are disulfide-bonded: cysteine 337/cysteine 342 and cysteine 361/cysteine 370.

It belongs to the glycosyl hydrolase 28 family.

Its subcellular location is the secreted. It catalyses the reaction (1,4-alpha-D-galacturonosyl)n+m + H2O = (1,4-alpha-D-galacturonosyl)n + (1,4-alpha-D-galacturonosyl)m.. The sequence is that of Polygalacturonase 1 (PG1) from Penicillium olsonii.